The following is a 212-amino-acid chain: MDNRFITIEGLDGAGKTTITHRVSKYLNQYGVTDILTTHEPGGTPVSDFLRVLIKYGGPMNEPINSISELLMIYAARLQLIENVIKPALSKGYWVIGDRFDLSSQAYQGGGRGIDILLLHALSNKITNTLSPDLTFYLDISPELSISRINHRQKLDRIEQEPLSFFDRVRSCYKKLASERKNIITIDATQSLEEVSMSIYRHLDWWFLRPQE.

10–17 provides a ligand contact to ATP; that stretch reads GLDGAGKT.

This sequence belongs to the thymidylate kinase family.

It carries out the reaction dTMP + ATP = dTDP + ADP. Phosphorylation of dTMP to form dTDP in both de novo and salvage pathways of dTTP synthesis. In Blochmanniella pennsylvanica (strain BPEN), this protein is Thymidylate kinase.